The following is a 322-amino-acid chain: Mitochondrial uncoupling protein 4 (322 aa).

Solcar repeat units follow at residues 20-114 (SKFL…LREV), 124-216 (YPLW…VKHY), and 225-316 (DNIS…IREM). Transmembrane regions (helical) follow at residues 22–39 (FLLS…TFPL), 87–108 (WQGV…MVTY), 126–143 (LWKS…GQFL), 194–211 (PNIQ…TTYD), 228–247 (STHG…LGTP), and 287–310 (SLYK…WLTY).

Belongs to the mitochondrial carrier (TC 2.A.29) family. As to quaternary structure, homotetramer.

Its subcellular location is the mitochondrion inner membrane. It is found in the cell projection. The protein localises to the neuron projection. It carries out the reaction H(+)(in) = H(+)(out). It catalyses the reaction chloride(in) = chloride(out). Its function is as follows. Facilitates proton transport across the inner mitochondrial membrane and may dissipate excessive proton gradient associated with oxidative and metabolic stress at neuronal synapses. Regulates glutamate-induced proton conductance in astrocytes, shifting the energy metabolism toward aerobic glycolysis and lactate transfer to neurons for ATP synthesis. Can transport chloride ions with lower efficiency. The transport mechanism remains to be elucidated. This Mus musculus (Mouse) protein is Mitochondrial uncoupling protein 4.